The chain runs to 148 residues: Hemoglobin subunit beta (148 aa).

The Globin domain maps to 3–148 (DWTDAERSAI…VVSALGRQYH (146 aa)). 2 residues coordinate heme b: His-64 and His-93.

It belongs to the globin family. In terms of assembly, heterotetramer of two alpha chains and two beta chains. Red blood cells.

Functionally, involved in oxygen transport from gills to the various peripheral tissues. In Oncorhynchus nerka (Sockeye salmon), this protein is Hemoglobin subunit beta (hbb).